Here is a 239-residue protein sequence, read N- to C-terminus: Beta-glucanase (239 aa).

The N-terminal stretch at 1 to 25 is a signal peptide; the sequence is MKRVLLILVTGLFMSLCGITSSVSA. The GH16 domain occupies 26-239; the sequence is QTGGSFFEPF…HYDWMRYRKK (214 aa). Cysteines 57 and 86 form a disulfide. The Nucleophile role is filled by glutamate 134.

It belongs to the glycosyl hydrolase 16 family.

It carries out the reaction Hydrolysis of (1-&gt;4)-beta-D-glucosidic linkages in beta-D-glucans containing (1-&gt;3)- and (1-&gt;4)-bonds.. This Bacillus amyloliquefaciens (Bacillus velezensis) protein is Beta-glucanase (bglA).